A 146-amino-acid chain; its full sequence is Hemoglobin subunit beta (146 aa).

The region spanning 2 to 146 (QWSAEEKQLI…VAHALARKYH (145 aa)) is the Globin domain. Heme b-binding residues include histidine 63 and histidine 92.

It belongs to the globin family. As to quaternary structure, heterotetramer of two alpha chains and two beta chains. Red blood cells.

Its function is as follows. Involved in oxygen transport from the lung to the various peripheral tissues. The polypeptide is Hemoglobin subunit beta (HBB) (Struthio camelus (Common ostrich)).